Consider the following 220-residue polypeptide: Probable transaldolase (220 aa).

Lys87 acts as the Schiff-base intermediate with substrate in catalysis.

Belongs to the transaldolase family. Type 3B subfamily.

The protein localises to the cytoplasm. The catalysed reaction is D-sedoheptulose 7-phosphate + D-glyceraldehyde 3-phosphate = D-erythrose 4-phosphate + beta-D-fructose 6-phosphate. Its pathway is carbohydrate degradation; pentose phosphate pathway; D-glyceraldehyde 3-phosphate and beta-D-fructose 6-phosphate from D-ribose 5-phosphate and D-xylulose 5-phosphate (non-oxidative stage): step 2/3. Functionally, transaldolase is important for the balance of metabolites in the pentose-phosphate pathway. The chain is Probable transaldolase from Porphyromonas gingivalis (strain ATCC 33277 / DSM 20709 / CIP 103683 / JCM 12257 / NCTC 11834 / 2561).